A 703-amino-acid chain; its full sequence is Elongation factor G (703 aa).

The tr-type G domain maps to 7 to 287; the sequence is KFTRNIGIAA…AVMRYLPSPA (281 aa). GTP is bound by residues 16-23, 84-88, and 138-141; these read AHIDAGKT, DTPGH, and NKMD.

This sequence belongs to the TRAFAC class translation factor GTPase superfamily. Classic translation factor GTPase family. EF-G/EF-2 subfamily.

The protein resides in the cytoplasm. In terms of biological role, catalyzes the GTP-dependent ribosomal translocation step during translation elongation. During this step, the ribosome changes from the pre-translocational (PRE) to the post-translocational (POST) state as the newly formed A-site-bound peptidyl-tRNA and P-site-bound deacylated tRNA move to the P and E sites, respectively. Catalyzes the coordinated movement of the two tRNA molecules, the mRNA and conformational changes in the ribosome. The polypeptide is Elongation factor G (Christiangramia forsetii (strain DSM 17595 / CGMCC 1.15422 / KT0803) (Gramella forsetii)).